A 211-amino-acid polypeptide reads, in one-letter code: MSTAAVPELKQISRVEAMRLGPGWSHSCHAMLYAANPGQLFGRIPMRFSVLMQMRFDGLLGFPGGFVDRRFWSLEDGLNRVLGLGLGCLRLTEADYLSSHLTEGPHRVVAHLYARQLTLEQLHAVEISAVHSRDHGLEVLGLVRVPLYTQKDRVGGFPNFLSNAFVSTAKCQLLFALKVLNMMPEEKLVEALAAATEKQKKALEKLLPASS.

Residues Lys10 and Lys151 each participate in a glycyl lysine isopeptide (Lys-Gly) (interchain with G-Cter in ubiquitin) cross-link. An interaction with PXN region spans residues 118–205 (TLEQLHAVEI…TEKQKKALEK (88 aa)).

It belongs to the Nudix hydrolase family. TIRR subfamily. In terms of assembly, homodimer. Interacts with TP53BP1 (via the Tudor-like domain); interaction is abolished following DNA damage and TP53BP1 phosphorylation by ATM. Interacts (via the cytoplasmic part) with SDC4. Interacts with TGFB1I1 and PXN.

Its subcellular location is the nucleus. In terms of biological role, key regulator of TP53BP1 required to stabilize TP53BP1 and regulate its recruitment to chromatin. In absence of DNA damage, interacts with the tandem Tudor-like domain of TP53BP1, masking the region that binds histone H4 dimethylated at 'Lys-20' (H4K20me2), thereby preventing TP53BP1 recruitment to chromatin and maintaining TP53BP1 localization to the nucleus. Following DNA damage, ATM-induced phosphorylation of TP53BP1 and subsequent recruitment of RIF1 leads to dissociate NUDT16L1/TIRR from TP53BP1, unmasking the tandem Tudor-like domain and allowing recruitment of TP53BP1 to DNA double strand breaks (DSBs). Binds U8 snoRNA. The chain is Tudor-interacting repair regulator protein from Homo sapiens (Human).